A 345-amino-acid polypeptide reads, in one-letter code: MQGTWFSLFVVVMVSHLACGGECSFGSHLADMAGLSGRHDKERHQAKKRYYHSMYGNQTPYPYANGQQASPPPQGQLLIIQNPDGSFMIVDQQGVPQVPQAAGGPGSPMNGGYYMPTGVYTAQVVPGTPGHPVQAIPQQPLRTQATATYYHPAAVPPPGPSVFVFTPSSVQPGAEVTPGYSGLQLRQQSQYGYSYPGTTSTPTPPPPASYGYPVFPAFPRLPAFSDSVSVSTEDSGLTGVKDSSSSESTVTPADEAASESEEGDKTSRKSKVKKGILTGLGVAATLAAAAAAAKAVKGFGGTRTSTAPAEAGKTELDDGYRPPPFNPRPSPYAELLKDLERMRKE.

The first 20 residues, 1 to 20 (MQGTWFSLFVVVMVSHLACG), serve as a signal peptide directing secretion. Polar residues predominate over residues 227–251 (SVSVSTEDSGLTGVKDSSSSESTVT). Positions 227–271 (SVSVSTEDSGLTGVKDSSSSESTVTPADEAASESEEGDKTSRKSK) are disordered. The helical transmembrane segment at 276–296 (ILTGLGVAATLAAAAAAAKAV) threads the bilayer. Residues 298–345 (GFGGTRTSTAPAEAGKTELDDGYRPPPFNPRPSPYAELLKDLERMRKE) form a disordered region. Over residues 321–330 (RPPPFNPRPS) the composition is skewed to pro residues. The segment covering 335–345 (LLKDLERMRKE) has biased composition (basic and acidic residues).

In terms of processing, O-glycosylated.

It is found in the secreted. The protein resides in the parasitophorous vacuole lumen. Its subcellular location is the parasitophorous vacuole membrane. It localises to the cytoplasmic vesicle. The protein localises to the secretory vesicle. Functionally, major granular component involved in excreted-secreted antigen (ESA) immunity. The polypeptide is Dense granule protein 4 (GRA4) (Toxoplasma gondii).